The following is a 284-amino-acid chain: Bifunctional protein FolD (284 aa).

Residues 166-168 (GAS) and I232 contribute to the NADP(+) site.

The protein belongs to the tetrahydrofolate dehydrogenase/cyclohydrolase family. As to quaternary structure, homodimer.

It catalyses the reaction (6R)-5,10-methylene-5,6,7,8-tetrahydrofolate + NADP(+) = (6R)-5,10-methenyltetrahydrofolate + NADPH. The enzyme catalyses (6R)-5,10-methenyltetrahydrofolate + H2O = (6R)-10-formyltetrahydrofolate + H(+). It participates in one-carbon metabolism; tetrahydrofolate interconversion. In terms of biological role, catalyzes the oxidation of 5,10-methylenetetrahydrofolate to 5,10-methenyltetrahydrofolate and then the hydrolysis of 5,10-methenyltetrahydrofolate to 10-formyltetrahydrofolate. The polypeptide is Bifunctional protein FolD (Alteromonas mediterranea (strain DSM 17117 / CIP 110805 / LMG 28347 / Deep ecotype)).